The sequence spans 453 residues: Ribulose bisphosphate carboxylase large chain (453 aa).

Residues 1 to 2 (MS) constitute a propeptide that is removed on maturation. An N-acetylproline modification is found at Pro-3. Lys-14 is subject to N6,N6,N6-trimethyllysine. Positions 123 and 173 each coordinate substrate. Lys-175 functions as the Proton acceptor in the catalytic mechanism. Lys-177 contributes to the substrate binding site. Mg(2+) contacts are provided by Lys-201, Asp-203, and Glu-204. Lys-201 carries the N6-carboxylysine modification. His-294 serves as the catalytic Proton acceptor. Residues Arg-295, His-327, and Ser-379 each contribute to the substrate site.

It belongs to the RuBisCO large chain family. Type I subfamily. Heterohexadecamer of 8 large chains and 8 small chains; disulfide-linked. The disulfide link is formed within the large subunit homodimers. Mg(2+) serves as cofactor. In terms of processing, the disulfide bond which can form in the large chain dimeric partners within the hexadecamer appears to be associated with oxidative stress and protein turnover.

The protein resides in the plastid. It localises to the chloroplast. It carries out the reaction 2 (2R)-3-phosphoglycerate + 2 H(+) = D-ribulose 1,5-bisphosphate + CO2 + H2O. The enzyme catalyses D-ribulose 1,5-bisphosphate + O2 = 2-phosphoglycolate + (2R)-3-phosphoglycerate + 2 H(+). Its function is as follows. RuBisCO catalyzes two reactions: the carboxylation of D-ribulose 1,5-bisphosphate, the primary event in carbon dioxide fixation, as well as the oxidative fragmentation of the pentose substrate in the photorespiration process. Both reactions occur simultaneously and in competition at the same active site. The polypeptide is Ribulose bisphosphate carboxylase large chain (Galium lucidum).